Consider the following 342-residue polypeptide: Nicotinate-nucleotide--dimethylbenzimidazole phosphoribosyltransferase (342 aa).

The active-site Proton acceptor is Glu311.

The protein belongs to the CobT family.

It carries out the reaction 5,6-dimethylbenzimidazole + nicotinate beta-D-ribonucleotide = alpha-ribazole 5'-phosphate + nicotinate + H(+). The protein operates within nucleoside biosynthesis; alpha-ribazole biosynthesis; alpha-ribazole from 5,6-dimethylbenzimidazole: step 1/2. Catalyzes the synthesis of alpha-ribazole-5'-phosphate from nicotinate mononucleotide (NAMN) and 5,6-dimethylbenzimidazole (DMB). This is Nicotinate-nucleotide--dimethylbenzimidazole phosphoribosyltransferase from Shewanella sediminis (strain HAW-EB3).